Consider the following 234-residue polypeptide: Serum amyloid P-component (234 aa).

An N-terminal signal peptide occupies residues 1–22 (MDKLLSLLGVSILAGLLLEAFA). Residues 27–226 (TGKVFVFPRQ…YAVIRPRCVA (200 aa)) enclose the Pentraxin (PTX) domain. N-linked (GlcNAc...) asparagine glycosylation occurs at N54. Residues C58 and C117 are joined by a disulfide bond. N81, E158, Q159, D160, and Q170 together coordinate Ca(2+).

The protein belongs to the pentraxin family. As to quaternary structure, homopentamer. Pentraxin (or pentaxin) have a discoid arrangement of 5 non-covalently bound subunits. Ca(2+) is required as a cofactor.

It is found in the secreted. This is Serum amyloid P-component (APCS) from Mesocricetus auratus (Golden hamster).